Here is a 545-residue protein sequence, read N- to C-terminus: Carboxypeptidase N subunit 2 (545 aa).

Positions 1 to 21 are cleaved as a signal peptide; it reads MLPGAWLLWTSLLLLARPAQP. In terms of domain architecture, LRRNT spans 22-49; that stretch reads CPMGCDCFVQEVFCSDEELATVPLDIPP. Residues asparagine 74, asparagine 111, and asparagine 119 are each glycosylated (N-linked (GlcNAc...) asparagine). LRR repeat units follow at residues 98 to 119, 122 to 143, 146 to 167, 170 to 191, 194 to 215, 218 to 239, 242 to 263, 266 to 287, 290 to 311, 314 to 335, 338 to 359, and 362 to 383; these read RLED…IFSN, SLGK…LFQH, ALES…LFQP, HLKT…LFHP, SLQT…VFGK, SLQE…VFSQ, CLER…IFAS, NLTF…LFAH, CLVG…TFAH, NLRS…IFRD, ELVK…LFQN, and KLEL…IFDT. Asparagine 228 carries an N-linked (GlcNAc...) asparagine glycan. Asparagine 266 is a glycosylation site (N-linked (GlcNAc...) asparagine). N-linked (GlcNAc...) asparagine glycans are attached at residues asparagine 348 and asparagine 359. An LRRCT domain is found at 395–447; that stretch reads NPWQCDCHLAYLFNWLQQYTDRLLNIQTYCAGPAYLKGQVVPALNEKQLVCPV. N-linked (GlcNAc...) asparagine glycosylation occurs at asparagine 518.

In terms of assembly, tetramer of two catalytic chains and two glycosylated inactive chains. Whether or not any Cys residues participate in intrachain bonds is unknown, but they do not form interchain disulfide bonds with the 50 kDa catalytic subunit.

It localises to the secreted. Its function is as follows. The 83 kDa subunit binds and stabilizes the catalytic subunit at 37 degrees Celsius and keeps it in circulation. Under some circumstances it may be an allosteric modifier of the catalytic subunit. In Homo sapiens (Human), this protein is Carboxypeptidase N subunit 2 (CPN2).